A 782-amino-acid chain; its full sequence is U-box domain-containing protein 7 (782 aa).

The U-box domain occupies 271 to 345 (VPPEELRCPI…ASWCEQNGTQ (75 aa)). ARM repeat units follow at residues 456–499 (EEAR…NLAV), 502–541 (NRNKELMLTSGVIRLLEKMISSAESHGSATALYLNLSCLD), 542–581 (EAKSVIGSSQAVPFLVQLLQKEIETQCKLDALHALYNLST), 583–623 (SPNI…NLAS), and 626–665 (EGKDEAVSSQGMISSLATVLDMGDTTEQEQAVSCLLILCN). Residues 707-729 (EERQQRDQPSSNRDEPPQKEPAR) show a composition bias toward basic and acidic residues. The segment at 707–765 (EERQQRDQPSSNRDEPPQKEPARKSLSAPLSVHGSTPASASVQDYEPRVLSKSMSRRKS) is disordered. The span at 739–748 (HGSTPASASV) shows a compositional bias: polar residues.

The enzyme catalyses S-ubiquitinyl-[E2 ubiquitin-conjugating enzyme]-L-cysteine + [acceptor protein]-L-lysine = [E2 ubiquitin-conjugating enzyme]-L-cysteine + N(6)-ubiquitinyl-[acceptor protein]-L-lysine.. The protein operates within protein modification; protein ubiquitination. Functions as an E3 ubiquitin ligase. The polypeptide is U-box domain-containing protein 7 (PUB7) (Arabidopsis thaliana (Mouse-ear cress)).